The sequence spans 94 residues: RING finger protein Z (94 aa).

Residues 1-19 are compositionally biased toward polar residues; it reads MGNCNGASKSNQPDSSRVT. The interval 1-20 is disordered; that stretch reads MGNCNGASKSNQPDSSRVTQ. Residue G2 is the site of N-myristoyl glycine; by host attachment. Residues 39–75 form an RING-type; atypical zinc finger; sequence CKCCWFADTNLITCNDHYLCLRCHQVMLRNSDLCNIC. The PTAP/PSAP motif signature appears at 89–92; the sequence is PTAP.

It belongs to the arenaviridae Z protein family. As to quaternary structure, interacts with protein NP; this interaction probably directs the encapsidated genome to budding sites. Interacts (via RING domain) with polymerase L; this interaction inhibits viral transcription and replication, Z partially blocks the product exit tunnel for the releasing nascent RNA product. Interacts with the glycoprotein complex; this interaction plays a role in virion budding. Interacts with host eIF4E; this interaction results in eIF4E reduced affinity for its substrate, the 5'-m7 G cap structure. Interacts (via late-budding domain) with host TSG101; this interaction is essential for budding and release of viral particles. Interacts with host RPLP0; this interaction may serve to load ribosome-like particles inside the virion. Interacts with host PML; this interaction induces PML bodies redistribution in the cytoplasm upon viral infection. In terms of processing, myristoylation is required for the role of RING finger protein Z in assembly and budding.

It localises to the virion. The protein localises to the host cytoplasm. The protein resides in the host perinuclear region. Its subcellular location is the host cell membrane. Its function is as follows. Plays a crucial role in virion assembly and budding. Expressed late in the virus life cycle, it acts as an inhibitor of viral transcription and RNA synthesis by interacting with the viral polymerase L. Presumably recruits the NP encapsidated genome to cellular membranes at budding sites via direct interaction with NP. Plays critical roles in the final steps of viral release by interacting with host TSG101, a member of the vacuolar protein-sorting pathway and using other cellular host proteins involved in vesicle formation pathway. The budding of the virus progeny occurs after association of protein Z with the viral glycoprotein complex SSP-GP1-GP2 at the cell periphery, step that requires myristoylation of protein Z. Also selectively represses protein production by associating with host eIF4E. In cell-based minigenome assay, has an inhibitory effect on the ribonucleoprotein machinery (vRNP), which is responsible for the replication and transcription of the viral genome. This chain is RING finger protein Z, found in Akodon azarae (Azara's grass mouse).